Consider the following 215-residue polypeptide: Orotate phosphoribosyltransferase (215 aa).

K26 contacts 5-phospho-alpha-D-ribose 1-diphosphate. Orotate is bound at residue 34–35; that stretch reads FF. 5-phospho-alpha-D-ribose 1-diphosphate-binding positions include 72-73, R99, K100, K103, H105, and 125-133; these read YK and DDVISSGIS. Residues S129 and R157 each contribute to the orotate site.

The protein belongs to the purine/pyrimidine phosphoribosyltransferase family. PyrE subfamily. As to quaternary structure, homodimer. It depends on Mg(2+) as a cofactor.

It catalyses the reaction orotidine 5'-phosphate + diphosphate = orotate + 5-phospho-alpha-D-ribose 1-diphosphate. It participates in pyrimidine metabolism; UMP biosynthesis via de novo pathway; UMP from orotate: step 1/2. Its function is as follows. Catalyzes the transfer of a ribosyl phosphate group from 5-phosphoribose 1-diphosphate to orotate, leading to the formation of orotidine monophosphate (OMP). The sequence is that of Orotate phosphoribosyltransferase from Halorhodospira halophila (strain DSM 244 / SL1) (Ectothiorhodospira halophila (strain DSM 244 / SL1)).